Reading from the N-terminus, the 403-residue chain is Eukaryotic translation initiation factor 3 subunit H (403 aa).

The MPN domain maps to 57–206; that stretch reads VRLDGLALTK…VKAYRLSPSF (150 aa). Positions 99–122 are disordered; it reads ALPNPGRSNSERDEEEDRSSRNAT.

The protein belongs to the eIF-3 subunit H family. In terms of assembly, component of the eukaryotic translation initiation factor 3 (eIF-3) complex.

The protein resides in the cytoplasm. Component of the eukaryotic translation initiation factor 3 (eIF-3) complex, which is involved in protein synthesis of a specialized repertoire of mRNAs and, together with other initiation factors, stimulates binding of mRNA and methionyl-tRNAi to the 40S ribosome. The eIF-3 complex specifically targets and initiates translation of a subset of mRNAs involved in cell proliferation. The protein is Eukaryotic translation initiation factor 3 subunit H of Mycosarcoma maydis (Corn smut fungus).